We begin with the raw amino-acid sequence, 135 residues long: Holo-[acyl-carrier-protein] synthase (135 aa).

Mg(2+)-binding residues include Asp-9 and Glu-63.

This sequence belongs to the P-Pant transferase superfamily. AcpS family. Requires Mg(2+) as cofactor.

It is found in the cytoplasm. It carries out the reaction apo-[ACP] + CoA = holo-[ACP] + adenosine 3',5'-bisphosphate + H(+). Its function is as follows. Transfers the 4'-phosphopantetheine moiety from coenzyme A to a Ser of acyl-carrier-protein. The sequence is that of Holo-[acyl-carrier-protein] synthase from Paraburkholderia phymatum (strain DSM 17167 / CIP 108236 / LMG 21445 / STM815) (Burkholderia phymatum).